We begin with the raw amino-acid sequence, 236 residues long: uncharacterized protein (236 aa).

The 206-residue stretch at 3–208 folds into the DPCK domain; it reads ILGLTGSIAT…PSYFFTLLCL (206 aa). 8 to 15 contacts ATP; that stretch reads GSIATGKS. 2 positions are modified to phosphoserine: Ser82 and Ser86.

The protein belongs to the CoaE family.

It localises to the cytoplasm. This is an uncharacterized protein from Schizosaccharomyces pombe (strain 972 / ATCC 24843) (Fission yeast).